Here is a 520-residue protein sequence, read N- to C-terminus: Bifunctional purine biosynthesis protein PurH (520 aa).

Positions 1-147 (MAKIGRALIS…KNNRDVTVVV (147 aa)) constitute an MGS-like domain.

It belongs to the PurH family.

It catalyses the reaction (6R)-10-formyltetrahydrofolate + 5-amino-1-(5-phospho-beta-D-ribosyl)imidazole-4-carboxamide = 5-formamido-1-(5-phospho-D-ribosyl)imidazole-4-carboxamide + (6S)-5,6,7,8-tetrahydrofolate. The enzyme catalyses IMP + H2O = 5-formamido-1-(5-phospho-D-ribosyl)imidazole-4-carboxamide. The protein operates within purine metabolism; IMP biosynthesis via de novo pathway; 5-formamido-1-(5-phospho-D-ribosyl)imidazole-4-carboxamide from 5-amino-1-(5-phospho-D-ribosyl)imidazole-4-carboxamide (10-formyl THF route): step 1/1. It participates in purine metabolism; IMP biosynthesis via de novo pathway; IMP from 5-formamido-1-(5-phospho-D-ribosyl)imidazole-4-carboxamide: step 1/1. In Geobacter sp. (strain M21), this protein is Bifunctional purine biosynthesis protein PurH.